We begin with the raw amino-acid sequence, 230 residues long: 7-cyano-7-deazaguanine synthase (230 aa).

Residue 8-18 (LSGGMDSAVVT) participates in ATP binding. Zn(2+)-binding residues include Cys186, Cys196, Cys199, and Cys202.

This sequence belongs to the QueC family. It depends on Zn(2+) as a cofactor.

It carries out the reaction 7-carboxy-7-deazaguanine + NH4(+) + ATP = 7-cyano-7-deazaguanine + ADP + phosphate + H2O + H(+). It functions in the pathway purine metabolism; 7-cyano-7-deazaguanine biosynthesis. Catalyzes the ATP-dependent conversion of 7-carboxy-7-deazaguanine (CDG) to 7-cyano-7-deazaguanine (preQ(0)). The chain is 7-cyano-7-deazaguanine synthase from Xylella fastidiosa (strain M12).